Consider the following 429-residue polypeptide: Enolase (429 aa).

A (2R)-2-phosphoglycerate-binding site is contributed by Gln-163. The active-site Proton donor is the Glu-205. Mg(2+) contacts are provided by Asp-242, Glu-287, and Asp-314. Residues Lys-339, Arg-368, Ser-369, and Lys-390 each contribute to the (2R)-2-phosphoglycerate site. Lys-339 (proton acceptor) is an active-site residue.

The protein belongs to the enolase family. The cofactor is Mg(2+).

The protein resides in the cytoplasm. It localises to the secreted. Its subcellular location is the cell surface. It catalyses the reaction (2R)-2-phosphoglycerate = phosphoenolpyruvate + H2O. It functions in the pathway carbohydrate degradation; glycolysis; pyruvate from D-glyceraldehyde 3-phosphate: step 4/5. In terms of biological role, catalyzes the reversible conversion of 2-phosphoglycerate (2-PG) into phosphoenolpyruvate (PEP). It is essential for the degradation of carbohydrates via glycolysis. This is Enolase from Cupriavidus taiwanensis (strain DSM 17343 / BCRC 17206 / CCUG 44338 / CIP 107171 / LMG 19424 / R1) (Ralstonia taiwanensis (strain LMG 19424)).